Reading from the N-terminus, the 247-residue chain is Protein eak-4 (247 aa).

A lipid anchor (N-myristoyl glycine) is attached at Gly2.

Expressed in the 2 embryonic head hypodermal cells XXXL/R.

It localises to the cell membrane. Together with eak-6 and sdf-9, negatively regulates dauer larva formation downstream of the insulin-like receptor daf-2 and in parallel with age-1, pdk-1 and akt-1. The protein is Protein eak-4 of Caenorhabditis elegans.